Reading from the N-terminus, the 488-residue chain is Protein nucleotidyltransferase YdiU (488 aa).

ATP-binding residues include Gly-91, Gly-93, Arg-94, Lys-114, Asp-126, Gly-127, Arg-177, and Arg-184. Asp-253 (proton acceptor) is an active-site residue. Mg(2+)-binding residues include Asn-254 and Asp-263. An ATP-binding site is contributed by Asp-263.

This sequence belongs to the SELO family. Mg(2+) is required as a cofactor. It depends on Mn(2+) as a cofactor.

It catalyses the reaction L-seryl-[protein] + ATP = 3-O-(5'-adenylyl)-L-seryl-[protein] + diphosphate. It carries out the reaction L-threonyl-[protein] + ATP = 3-O-(5'-adenylyl)-L-threonyl-[protein] + diphosphate. The catalysed reaction is L-tyrosyl-[protein] + ATP = O-(5'-adenylyl)-L-tyrosyl-[protein] + diphosphate. The enzyme catalyses L-histidyl-[protein] + UTP = N(tele)-(5'-uridylyl)-L-histidyl-[protein] + diphosphate. It catalyses the reaction L-seryl-[protein] + UTP = O-(5'-uridylyl)-L-seryl-[protein] + diphosphate. It carries out the reaction L-tyrosyl-[protein] + UTP = O-(5'-uridylyl)-L-tyrosyl-[protein] + diphosphate. Functionally, nucleotidyltransferase involved in the post-translational modification of proteins. It can catalyze the addition of adenosine monophosphate (AMP) or uridine monophosphate (UMP) to a protein, resulting in modifications known as AMPylation and UMPylation. This is Protein nucleotidyltransferase YdiU from Bacillus cereus (strain AH187).